The following is a 627-amino-acid chain: (-)-alpha-pinene synthase 1, chloroplastic (627 aa).

The N-terminal 36 residues, 1 to 36 (MALVSIAPLASKSCLHKSLSSSAHELKTICRTIPTL), are a transit peptide targeting the chloroplast. Mg(2+)-binding residues include D378, D382, and D530. The DDXXD motif motif lies at 378–382 (DDMYD).

Belongs to the terpene synthase family. Tpsd subfamily. It depends on Mg(2+) as a cofactor. The cofactor is Mn(2+).

The protein localises to the plastid. It is found in the chloroplast. It carries out the reaction (2E)-geranyl diphosphate = (1S,5S)-beta-pinene + diphosphate. It catalyses the reaction (2E)-geranyl diphosphate = (1S,5S)-alpha-pinene + diphosphate. It functions in the pathway terpene metabolism; oleoresin biosynthesis. Terpene synthase (TPS) involved in the biosynthesis of monoterpene natural products included in conifer oleoresin secretions and volatile emissions; these compounds contribute to biotic and abiotic stress defense against herbivores and pathogens. Catalyzes the conversion of (2E)-geranyl diphosphate (GPP) to (1S,5S)-beta-pinene. This Picea sitchensis (Sitka spruce) protein is (-)-alpha-pinene synthase 1, chloroplastic.